Reading from the N-terminus, the 431-residue chain is Glutamate--tRNA ligase 1 (431 aa).

Residues Pro-6–Asn-16 carry the 'HIGH' region motif. The 'KMSKS' region signature appears at Lys-235–Arg-239. Lys-238 is a binding site for ATP.

The protein belongs to the class-I aminoacyl-tRNA synthetase family. Glutamate--tRNA ligase type 1 subfamily. Monomer.

The protein localises to the cytoplasm. It carries out the reaction tRNA(Glu) + L-glutamate + ATP = L-glutamyl-tRNA(Glu) + AMP + diphosphate. Functionally, catalyzes the attachment of glutamate to tRNA(Glu) in a two-step reaction: glutamate is first activated by ATP to form Glu-AMP and then transferred to the acceptor end of tRNA(Glu). This is Glutamate--tRNA ligase 1 from Campylobacter jejuni subsp. jejuni serotype O:23/36 (strain 81-176).